The chain runs to 314 residues: Putative S-adenosyl-L-methionine-dependent methyltransferase MRA_3805 (314 aa).

S-adenosyl-L-methionine-binding positions include Asp-132 and 161 to 162; that span reads DL.

The protein belongs to the UPF0677 family.

Exhibits S-adenosyl-L-methionine-dependent methyltransferase activity. In Mycobacterium tuberculosis (strain ATCC 25177 / H37Ra), this protein is Putative S-adenosyl-L-methionine-dependent methyltransferase MRA_3805.